Reading from the N-terminus, the 129-residue chain is Small ribosomal subunit protein uS11 (129 aa).

Belongs to the universal ribosomal protein uS11 family. In terms of assembly, part of the 30S ribosomal subunit. Interacts with proteins S7 and S18. Binds to IF-3.

Its function is as follows. Located on the platform of the 30S subunit, it bridges several disparate RNA helices of the 16S rRNA. Forms part of the Shine-Dalgarno cleft in the 70S ribosome. The polypeptide is Small ribosomal subunit protein uS11 (Methylobacterium radiotolerans (strain ATCC 27329 / DSM 1819 / JCM 2831 / NBRC 15690 / NCIMB 10815 / 0-1)).